A 247-amino-acid chain; its full sequence is Cytochrome c oxidase subunit 2 (247 aa).

At 12 to 38 (DVPTPWGLYFQDSSTPNQEGIIELHDN) the chain is on the mitochondrial intermembrane side. A helical transmembrane segment spans residues 39-59 (IMFYLVLILCTVSWLLFSIVK). Topologically, residues 60–78 (DSSKNPLPHKYLVHGQTIE) are mitochondrial matrix. Residues 79–101 (IIWTILPAVVLLIIAFPSFILLY) form a helical membrane-spanning segment. The Mitochondrial intermembrane portion of the chain corresponds to 102 to 247 (LCDEVISPAM…KEFLTWLNEQ (146 aa)). Residues histidine 182, cysteine 217, glutamate 219, cysteine 221, histidine 225, and methionine 228 each coordinate Cu cation. Glutamate 219 provides a ligand contact to Mg(2+).

The protein belongs to the cytochrome c oxidase subunit 2 family. Component of the cytochrome c oxidase (complex IV, CIV), a multisubunit enzyme composed of a catalytic core of 3 subunits and several supernumerary subunits. The complex exists as a monomer or a dimer and forms supercomplexes (SCs) in the inner mitochondrial membrane with ubiquinol-cytochrome c oxidoreductase (cytochrome b-c1 complex, complex III, CIII). The cofactor is Cu cation. Post-translationally, the signal sequence of COX2 is processed by IMP1.

It localises to the mitochondrion inner membrane. The catalysed reaction is 4 Fe(II)-[cytochrome c] + O2 + 8 H(+)(in) = 4 Fe(III)-[cytochrome c] + 2 H2O + 4 H(+)(out). Its function is as follows. Component of the cytochrome c oxidase, the last enzyme in the mitochondrial electron transport chain which drives oxidative phosphorylation. The respiratory chain contains 3 multisubunit complexes succinate dehydrogenase (complex II, CII), ubiquinol-cytochrome c oxidoreductase (cytochrome b-c1 complex, complex III, CIII) and cytochrome c oxidase (complex IV, CIV), that cooperate to transfer electrons derived from NADH and succinate to molecular oxygen, creating an electrochemical gradient over the inner membrane that drives transmembrane transport and the ATP synthase. Cytochrome c oxidase is the component of the respiratory chain that catalyzes the reduction of oxygen to water. Electrons originating from reduced cytochrome c in the intermembrane space (IMS) are transferred via the dinuclear copper A center (CU(A)) of subunit 2 and heme A of subunit 1 to the active site in subunit 1, a binuclear center (BNC) formed by heme A3 and copper B (CU(B)). The BNC reduces molecular oxygen to 2 water molecules using 4 electrons from cytochrome c in the IMS and 4 protons from the mitochondrial matrix. The sequence is that of Cytochrome c oxidase subunit 2 (COX2) from Cyberlindnera saturnus (Yeast).